Reading from the N-terminus, the 175-residue chain is ATP-dependent protease subunit HslV (175 aa).

The active site involves Thr-2. 3 residues coordinate Na(+): Gly-158, Cys-161, and Thr-164.

The protein belongs to the peptidase T1B family. HslV subfamily. In terms of assembly, a double ring-shaped homohexamer of HslV is capped on each side by a ring-shaped HslU homohexamer. The assembly of the HslU/HslV complex is dependent on binding of ATP.

The protein localises to the cytoplasm. The catalysed reaction is ATP-dependent cleavage of peptide bonds with broad specificity.. Its activity is regulated as follows. Allosterically activated by HslU binding. Protease subunit of a proteasome-like degradation complex believed to be a general protein degrading machinery. This chain is ATP-dependent protease subunit HslV, found in Haemophilus influenzae (strain 86-028NP).